A 358-amino-acid polypeptide reads, in one-letter code: Replication-associated protein (358 aa).

In terms of domain architecture, CRESS-DNA virus Rep endonuclease spans 8-116; that stretch reads RIQAKNIFLT…DGDTIEWGEF (109 aa). The short motif at 15 to 18 is the RCR-1 element; it reads FLTY. A divalent metal cation is bound by residues Glu49, His57, and His59. An RCR-2 motif is present at residues 57 to 59; that stretch reads HLH. Catalysis depends on Tyr103, which acts as the For DNA cleavage activity. The RCR-3 motif lies at 103–106; the sequence is YVDK. Asp107 is an a divalent metal cation binding site. The interval 143–153 is binding to RBR1; sequence LEQALQILKEE. An oligomerization region spans residues 156–176; it reads KDYFLQHHNLLNNAQKIFQRA. Residue 222-229 participates in ATP binding; that stretch reads GDSRTGKT.

This sequence belongs to the geminiviridae Rep protein family. In terms of assembly, homooligomer. Interacts with the replication enhancer protein (REn). Interacts with host retinoblastoma-related protein 1 (RBR1), and may thereby induce the transcription of host replicative enzymes even if the cell is not dividing anymore. Interacts with host PCNA. Interacts with host SCE1 protein. The cofactor is Mg(2+). Requires Mn(2+) as cofactor.

It localises to the host nucleus. Its function is as follows. Essential for the replication of viral ssDNA. The closed circular ssDNA genome is first converted to a superhelical dsDNA. Rep binds a specific region at the genome origin of replication. It introduces an endonucleolytic nick within the conserved sequence 5'-TAATATTAC-3' in the intergenic region of the genome present in all geminiviruses, thereby initiating the rolling circle replication (RCR). Following cleavage, binds covalently to the 5'-phosphate of DNA as a tyrosyl ester. The cleavage gives rise to a free 3'-OH that serves as a primer for the cellular DNA polymerase. The polymerase synthesizes the (+) strand DNA by rolling circle mechanism. After one round of replication, a Rep-catalyzed nucleotidyl transfer reaction releases a circular single-stranded virus genome, thereby terminating the replication. Displays origin-specific DNA cleavage, nucleotidyl transferase, ATPase and helicase activities. The sequence is that of Replication-associated protein from Beet curly top virus (strain California/Logan) (BCTV).